We begin with the raw amino-acid sequence, 621 residues long: Chaperone protein HscA homolog (621 aa).

This sequence belongs to the heat shock protein 70 family.

Chaperone involved in the maturation of iron-sulfur cluster-containing proteins. Has a low intrinsic ATPase activity which is markedly stimulated by HscB. The polypeptide is Chaperone protein HscA homolog (Ralstonia nicotianae (strain ATCC BAA-1114 / GMI1000) (Ralstonia solanacearum)).